The chain runs to 332 residues: RNA polymerase principal sigma factor HrdD (332 aa).

Basic residues predominate over residues 1 to 11 (MATRAVARRKS). The interval 1–25 (MATRAVARRKSAAGETSGSATSVRA) is disordered. Over residues 13-22 (AGETSGSATS) the composition is skewed to low complexity. Residues 124-137 (DLIQEGNAGLVRAV) carry the Polymerase core binding motif. A DNA-binding region (H-T-H motif) is located at residues 294–313 (LTEVGKEHGLTRERIRQIEK).

The protein belongs to the sigma-70 factor family. In terms of assembly, interacts transiently with the RNA polymerase catalytic core.

Its function is as follows. Sigma factors are initiation factors that promote the attachment of RNA polymerase to specific initiation sites and are then released. This chain is RNA polymerase principal sigma factor HrdD (hrdD), found in Streptomyces coelicolor (strain ATCC BAA-471 / A3(2) / M145).